Reading from the N-terminus, the 80-residue chain is Large ribosomal subunit protein bL31B (80 aa).

The protein belongs to the bacterial ribosomal protein bL31 family. Type B subfamily. Part of the 50S ribosomal subunit.

This is Large ribosomal subunit protein bL31B from Shouchella clausii (strain KSM-K16) (Alkalihalobacillus clausii).